We begin with the raw amino-acid sequence, 159 residues long: NADH-quinone oxidoreductase subunit I (159 aa).

2 consecutive 4Fe-4S ferredoxin-type domains span residues arginine 51–aspartate 80 and threonine 90–asparagine 119. Cysteine 60, cysteine 63, cysteine 66, cysteine 70, cysteine 99, cysteine 102, cysteine 105, and cysteine 109 together coordinate [4Fe-4S] cluster.

This sequence belongs to the complex I 23 kDa subunit family. As to quaternary structure, NDH-1 is composed of 14 different subunits. Subunits NuoA, H, J, K, L, M, N constitute the membrane sector of the complex. [4Fe-4S] cluster serves as cofactor.

It localises to the cell inner membrane. It catalyses the reaction a quinone + NADH + 5 H(+)(in) = a quinol + NAD(+) + 4 H(+)(out). In terms of biological role, NDH-1 shuttles electrons from NADH, via FMN and iron-sulfur (Fe-S) centers, to quinones in the respiratory chain. The immediate electron acceptor for the enzyme in this species is believed to be ubiquinone. Couples the redox reaction to proton translocation (for every two electrons transferred, four hydrogen ions are translocated across the cytoplasmic membrane), and thus conserves the redox energy in a proton gradient. The polypeptide is NADH-quinone oxidoreductase subunit I (Rickettsia peacockii (strain Rustic)).